The sequence spans 326 residues: GTP 3',8-cyclase (326 aa).

The Radical SAM core domain maps to 7 to 240; that stretch reads AFARKFYYLR…AQVFHHSDYQ (234 aa). A GTP-binding site is contributed by Arg16. [4Fe-4S] cluster is bound by residues Cys23 and Cys27. Residue Tyr29 coordinates S-adenosyl-L-methionine. A [4Fe-4S] cluster-binding site is contributed by Cys30. Arg65 lines the GTP pocket. S-adenosyl-L-methionine is bound at residue Gly69. Thr96 contacts GTP. Ser120 contributes to the S-adenosyl-L-methionine binding site. Lys157 provides a ligand contact to GTP. S-adenosyl-L-methionine is bound at residue Met191. The [4Fe-4S] cluster site is built by Cys254 and Cys257. 259–261 contributes to the GTP binding site; it reads RLR. A [4Fe-4S] cluster-binding site is contributed by Cys271.

The protein belongs to the radical SAM superfamily. MoaA family. As to quaternary structure, monomer and homodimer. The cofactor is [4Fe-4S] cluster.

It carries out the reaction GTP + AH2 + S-adenosyl-L-methionine = (8S)-3',8-cyclo-7,8-dihydroguanosine 5'-triphosphate + 5'-deoxyadenosine + L-methionine + A + H(+). It functions in the pathway cofactor biosynthesis; molybdopterin biosynthesis. Catalyzes the cyclization of GTP to (8S)-3',8-cyclo-7,8-dihydroguanosine 5'-triphosphate. The sequence is that of GTP 3',8-cyclase from Yersinia pestis.